Here is a 171-residue protein sequence, read N- to C-terminus: UPF0398 protein spyM18_1659 (171 aa).

The protein belongs to the UPF0398 family.

This is UPF0398 protein spyM18_1659 from Streptococcus pyogenes serotype M18 (strain MGAS8232).